An 84-amino-acid chain; its full sequence is UPF0298 protein NWMN_0985 (84 aa).

It belongs to the UPF0298 family.

The protein localises to the cytoplasm. The sequence is that of UPF0298 protein NWMN_0985 from Staphylococcus aureus (strain Newman).